The chain runs to 318 residues: Methionyl-tRNA formyltransferase (318 aa).

111–114 (SLLP) contributes to the (6S)-5,6,7,8-tetrahydrofolate binding site.

Belongs to the Fmt family.

The catalysed reaction is L-methionyl-tRNA(fMet) + (6R)-10-formyltetrahydrofolate = N-formyl-L-methionyl-tRNA(fMet) + (6S)-5,6,7,8-tetrahydrofolate + H(+). Functionally, attaches a formyl group to the free amino group of methionyl-tRNA(fMet). The formyl group appears to play a dual role in the initiator identity of N-formylmethionyl-tRNA by promoting its recognition by IF2 and preventing the misappropriation of this tRNA by the elongation apparatus. In Chlorobium limicola (strain DSM 245 / NBRC 103803 / 6330), this protein is Methionyl-tRNA formyltransferase.